The sequence spans 323 residues: Replication-associated protein A (323 aa).

A CRESS-DNA virus Rep endonuclease domain is found at 18 to 121; it reads RHRNANTFLT…PKDKWEKGTY (104 aa). Residues 25-28 carry the RCR-1 motif; sequence FLTY. A divalent metal cation contacts are provided by glutamate 59, histidine 67, and histidine 69. The RCR-2 signature appears at 67-69; that stretch reads HCH. The active-site For DNA cleavage activity is the tyrosine 107. The RCR-3 signature appears at 107–110; sequence YILK. An a divalent metal cation-binding site is contributed by aspartate 111. The tract at residues 181–193 is oligomerization; that stretch reads SASRLFPDIAEPY. The short motif at 204–208 is the LXCXE motif, interaction with host RBR1 element; sequence LHCNE. The segment at 256-286 is disordered; the sequence is KEREASTSAAQHGQVKHPGLEASDDTTTGKT.

Belongs to the geminiviridae Rep protein family. As to quaternary structure, homooligomer. Interacts (via LXCXE domain) with host retinoblastoma-related protein 1 (RBR1), and may thereby deregulate the host cell cycle. Part of the C- and V-complexes which are RepA-Rep-DNA complexes involved in the c-sense and v-sense transcription. Mg(2+) serves as cofactor. Mn(2+) is required as a cofactor.

It is found in the host nucleus. Its subcellular location is the host cytoplasm. In terms of biological role, implicated in enhancement of V-sense gene expression. Acts a an inhibitor of C-sense gene transcription. In Megathyrsus maximus (PanSV), this protein is Replication-associated protein A.